A 770-amino-acid polypeptide reads, in one-letter code: POU domain, class 2, transcription factor 1 (770 aa).

Over residues 1–26 (MNNPSETNKSSMESEDASTGTQTNGL) the composition is skewed to polar residues. Disordered regions lie at residues 1 to 33 (MNNP…KQPV), 68 to 97 (LNVQ…VQSA), 262 to 285 (VQTL…EPSD), and 357 to 385 (LSSD…RRKK). Over residues 80–97 (DSQQSSQPSSQPPSVQSA) the composition is skewed to low complexity. A compositionally biased stretch (polar residues) spans 262–272 (VQTLPQSQSTP). 2 positions are modified to phosphothreonine: T271 and T277. The region spanning 281–355 (EEPSDLEELE…LLEKWLNDAE (75 aa)) is the POU-specific domain. Phosphoserine is present on S284. Positions 357 to 372 (LSSDSTASSPSALNSP) are enriched in low complexity. Positions 382–441 (RRKKRTSIETNIRVALEKSFMENQKPTSEDITLIAEQLNMEKEVIRVWFCNRRQKEKRIN) form a DNA-binding region, homeobox. 2 positions are modified to phosphoserine: S388 and S451. Positions 519-580 (TTTAGTTDST…TNTTQTTSTP (62 aa)) are enriched in low complexity. Residues 519–589 (TTTAGTTDST…PLPSPLGASQ (71 aa)) form a disordered region.

The protein belongs to the POU transcription factor family. Class-2 subfamily. In terms of assembly, interacts with POU2AF1; the interaction increases POU2F1 transactivation activity. Interacts with NR3C1, AR, PGR and HCFC1. Phosphorylated by PRKDC. In terms of tissue distribution, ubiquitously expressed. However, isoforms 4 and 5 are only expressed in lymphocytes.

It is found in the nucleus. In terms of biological role, transcription factor that binds to the octamer motif (5'-ATTTGCAT-3') and activates the promoters of the genes for some small nuclear RNAs (snRNA) and of genes such as those for histone H2B and immunoglobulins. Modulates transcription transactivation by NR3C1, AR and PGR. This is POU domain, class 2, transcription factor 1 (Pou2f1) from Mus musculus (Mouse).